The chain runs to 592 residues: Aspartate--tRNA(Asp/Asn) ligase (592 aa).

E175 provides a ligand contact to L-aspartate. The tract at residues 199 to 202 is aspartate; it reads QQFK. L-aspartate contacts are provided by R221 and H451. Position 221–223 (221–223) interacts with ATP; the sequence is RDE. ATP is bound at residue E485. R492 lines the L-aspartate pocket. Position 537-540 (537-540) interacts with ATP; the sequence is GIDR.

This sequence belongs to the class-II aminoacyl-tRNA synthetase family. Type 1 subfamily. In terms of assembly, homodimer.

It is found in the cytoplasm. It carries out the reaction tRNA(Asx) + L-aspartate + ATP = L-aspartyl-tRNA(Asx) + AMP + diphosphate. Functionally, aspartyl-tRNA synthetase with relaxed tRNA specificity since it is able to aspartylate not only its cognate tRNA(Asp) but also tRNA(Asn). Reaction proceeds in two steps: L-aspartate is first activated by ATP to form Asp-AMP and then transferred to the acceptor end of tRNA(Asp/Asn). The protein is Aspartate--tRNA(Asp/Asn) ligase of Phenylobacterium zucineum (strain HLK1).